The following is an 804-amino-acid chain: Probable cadmium-transporting ATPase (804 aa).

2 consecutive HMA domains span residues 11-74 and 89-152; these read DKQV…LKVA and DKNV…LKVI. Residues Cys22, Cys25, Cys100, and Cys103 each coordinate Cd(2+). Helical transmembrane passes span 183–203, 207–227, 248–268, 413–433, and 441–461; these read STLLFATLLIAFGYLSHFVNG, LVTSMLFVSSIVIGGYSLFKV, IGAAIIGEWAEASIVVILFAI, IIMVIAALVAVVPPLFFGGSW, and LAVLVVGCPCALVITTPISIV. Residue Asp492 is the 4-aspartylphosphate intermediate of the active site. A run of 2 helical transmembrane segments spans residues 749–771 and 776–798; these read LNIIKANITFAIGIKIIALLLVI and TLWIAILSDMGATILVALNSLRL.

Belongs to the cation transport ATPase (P-type) (TC 3.A.3) family. Type IB subfamily.

Its subcellular location is the cell membrane. It carries out the reaction Cd(2+)(in) + ATP + H2O = Cd(2+)(out) + ADP + phosphate + H(+). In terms of biological role, couples the hydrolysis of ATP with the export of cadmium. Involved in cadmium resistance. The chain is Probable cadmium-transporting ATPase (cadA) from Staphylococcus aureus.